Reading from the N-terminus, the 97-residue chain is Secreted Ly-6/uPAR domain-containing protein 2 (97 aa).

Residues 1–22 (MQFHTGLLLAAVLSLQLAAAQA) form the signal peptide. A UPAR/Ly6 domain is found at 23–95 (LWCHQCTGFG…IACCQTSLCN (73 aa)). Disulfide bonds link Cys-25-Cys-47, Cys-28-Cys-34, Cys-40-Cys-68, Cys-72-Cys-88, and Cys-89-Cys-94.

In terms of assembly, interacts with CHRNA3, CHRNA4, CHRNA5, CHRNA7, CHRNB2 and CHRNB4. Interacts with CHRM1 and CHRM3 probably in an allosteric manner.

The protein resides in the secreted. Binds and may modulate the functional properties of nicotinic and muscarinic acetylcholine receptors. May regulate keratinocytes proliferation, differentiation and apoptosis. In vitro moderately inhibits ACh-evoked currents of alpha-3:beta-2-containing nAChRs, strongly these of alpha-4:beta-2-containing nAChRs, modulates alpha-7-containing nAChRs, and inhibits nicotine-induced signaling probably implicating alpha-3:beta-4-containing nAChRs. Proposed to act on alpha-3:beta-2 and alpha-7 nAChRs in an orthosteric, and on mAChRs, such as CHRM1 and CHRM3, in an allosteric manner. This chain is Secreted Ly-6/uPAR domain-containing protein 2, found in Macaca mulatta (Rhesus macaque).